The chain runs to 95 residues: Small ribosomal subunit protein uS17 (95 aa).

The protein belongs to the universal ribosomal protein uS17 family. As to quaternary structure, part of the 30S ribosomal subunit.

One of the primary rRNA binding proteins, it binds specifically to the 5'-end of 16S ribosomal RNA. This chain is Small ribosomal subunit protein uS17, found in Mycoplasmopsis synoviae (strain 53) (Mycoplasma synoviae).